The following is a 239-amino-acid chain: Tetratricopeptide repeat protein 9B (239 aa).

2 disordered regions span residues 1–57 (MQRG…LGAA) and 99–126 (QGAR…SEEQ). Residues Ser-7 and Ser-27 each carry the phosphoserine modification. Pro residues predominate over residues 16 to 31 (PEPPPRPPPALSPPGS). The stretch at 65–99 (AVAFKAEGQRCYREKKFREAIGKYHRALLQLKAAQ) is one TPR 1 repeat. A compositionally biased stretch (pro residues) spans 106–116 (LPAPAPGPTSS). One copy of the TPR 2 repeat lies at 171 to 204 (FKATYRAGIAFYHLGDYARALRYLQEARSREPTD).

Belongs to the TTC9 family.

The protein is Tetratricopeptide repeat protein 9B (TTC9B) of Homo sapiens (Human).